Reading from the N-terminus, the 513-residue chain is uncharacterized protein (513 aa).

Residues His11–Thr219 form the CYTH domain. The CHAD domain maps to Pro228 to Lys506.

This is an uncharacterized protein from Mycobacterium tuberculosis (strain ATCC 25618 / H37Rv).